Reading from the N-terminus, the 286-residue chain is tRNA uridine(34) hydroxylase (286 aa).

A Rhodanese domain is found at 130–225 (RGDDVVFFDG…YGETFGDRGL (96 aa)). The Cysteine persulfide intermediate role is filled by Cys-185.

Belongs to the TrhO family.

The enzyme catalyses uridine(34) in tRNA + AH2 + O2 = 5-hydroxyuridine(34) in tRNA + A + H2O. Its function is as follows. Catalyzes oxygen-dependent 5-hydroxyuridine (ho5U) modification at position 34 in tRNAs. This chain is tRNA uridine(34) hydroxylase, found in Rhodococcus erythropolis (strain PR4 / NBRC 100887).